Reading from the N-terminus, the 241-residue chain is NAD-dependent protein deacetylase 2 (241 aa).

The Deacetylase sirtuin-type domain maps to 1-241 (MTGKPLVAIL…ALPALLRGLG (241 aa)). The NAD(+) site is built by Ala-13, Thr-17, Arg-25, Gln-92, Val-94, Asp-95, and His-112. Val-94 and Asp-95 together coordinate nicotinamide. His-112 acts as the Proton acceptor in catalysis. Zn(2+) contacts are provided by Cys-120, Cys-123, Cys-145, and Cys-148. Residues Thr-186, Ser-187, Asn-211, and Ile-229 each contribute to the NAD(+) site.

The protein belongs to the sirtuin family. Class U subfamily. Zn(2+) serves as cofactor.

The protein localises to the cytoplasm. The enzyme catalyses N(6)-acetyl-L-lysyl-[protein] + NAD(+) + H2O = 2''-O-acetyl-ADP-D-ribose + nicotinamide + L-lysyl-[protein]. NAD-dependent protein deacetylase which modulates the activities of several enzymes which are inactive in their acetylated form. This Streptomyces coelicolor (strain ATCC BAA-471 / A3(2) / M145) protein is NAD-dependent protein deacetylase 2.